The primary structure comprises 397 residues: uncharacterized protein (397 aa).

The next 4 helical transmembrane spans lie at 142 to 162 (WETI…VGIA), 191 to 211 (SQLL…SVVL), 242 to 258 (ALTG…TYFL), and 260 to 280 (APWL…SAGF).

It belongs to the cation diffusion facilitator (CDF) transporter (TC 2.A.4) family. SLC30A subfamily.

Its subcellular location is the membrane. This is an uncharacterized protein from Schizosaccharomyces pombe (strain 972 / ATCC 24843) (Fission yeast).